The following is a 591-amino-acid chain: L-fucose isomerase (591 aa).

Active-site proton acceptor residues include glutamate 337 and aspartate 361. Mn(2+)-binding residues include glutamate 337, aspartate 361, and histidine 528.

The protein belongs to the L-fucose isomerase family. In terms of assembly, homohexamer. Mn(2+) serves as cofactor.

The protein localises to the cytoplasm. It catalyses the reaction L-fucose = L-fuculose. The protein operates within carbohydrate degradation; L-fucose degradation; L-lactaldehyde and glycerone phosphate from L-fucose: step 1/3. Converts the aldose L-fucose into the corresponding ketose L-fuculose. This is L-fucose isomerase from Salmonella arizonae (strain ATCC BAA-731 / CDC346-86 / RSK2980).